Consider the following 725-residue polypeptide: Methionine--tRNA ligase (725 aa).

Residues 27-37 (PYANGQIHIGH) carry the 'HIGH' region motif. Zn(2+) contacts are provided by Cys-158, Cys-161, Cys-171, and Cys-174. The short motif at 348–352 (KMSKS) is the 'KMSKS' region element. Lys-351 provides a ligand contact to ATP. Residues 619 to 725 (DFAKIDLRIA…SGAKPGMRVK (107 aa)) form the tRNA-binding domain.

It belongs to the class-I aminoacyl-tRNA synthetase family. MetG type 1 subfamily. As to quaternary structure, homodimer. Zn(2+) serves as cofactor.

It localises to the cytoplasm. It carries out the reaction tRNA(Met) + L-methionine + ATP = L-methionyl-tRNA(Met) + AMP + diphosphate. Is required not only for elongation of protein synthesis but also for the initiation of all mRNA translation through initiator tRNA(fMet) aminoacylation. The polypeptide is Methionine--tRNA ligase (Burkholderia pseudomallei (strain 1106a)).